A 329-amino-acid chain; its full sequence is Peroxidase 5 (329 aa).

An N-terminal signal peptide occupies residues 1 to 26 (MSSKRVTWLSLTWVLVFLCLSVELEA). Glutamine 27 is subject to Pyrrolidone carboxylic acid. Cystine bridges form between cysteine 37/cysteine 117, cysteine 70/cysteine 75, cysteine 123/cysteine 324, and cysteine 202/cysteine 234. The active-site Proton acceptor is the histidine 68. Positions 69, 72, 74, 76, and 78 each coordinate Ca(2+). Proline 165 contributes to the substrate binding site. Histidine 195 contributes to the heme b binding site. Threonine 196 contacts Ca(2+). The N-linked (GlcNAc...) asparagine glycan is linked to asparagine 213. Residues serine 251 and aspartate 256 each contribute to the Ca(2+) site.

This sequence belongs to the peroxidase family. Classical plant (class III) peroxidase subfamily. Heme b is required as a cofactor. Ca(2+) serves as cofactor.

The protein resides in the secreted. The enzyme catalyses 2 a phenolic donor + H2O2 = 2 a phenolic radical donor + 2 H2O. Functionally, removal of H(2)O(2), oxidation of toxic reductants, biosynthesis and degradation of lignin, suberization, auxin catabolism, response to environmental stresses such as wounding, pathogen attack and oxidative stress. These functions might be dependent on each isozyme/isoform in each plant tissue. The chain is Peroxidase 5 from Vitis vinifera (Grape).